The primary structure comprises 282 residues: Bifunctional protein FolD (282 aa).

Residues 165-167, S190, and I231 contribute to the NADP(+) site; that span reads NRS.

It belongs to the tetrahydrofolate dehydrogenase/cyclohydrolase family. Homodimer.

It catalyses the reaction (6R)-5,10-methylene-5,6,7,8-tetrahydrofolate + NADP(+) = (6R)-5,10-methenyltetrahydrofolate + NADPH. It carries out the reaction (6R)-5,10-methenyltetrahydrofolate + H2O = (6R)-10-formyltetrahydrofolate + H(+). It functions in the pathway one-carbon metabolism; tetrahydrofolate interconversion. In terms of biological role, catalyzes the oxidation of 5,10-methylenetetrahydrofolate to 5,10-methenyltetrahydrofolate and then the hydrolysis of 5,10-methenyltetrahydrofolate to 10-formyltetrahydrofolate. This Clostridium botulinum (strain ATCC 19397 / Type A) protein is Bifunctional protein FolD.